The sequence spans 300 residues: N-acetylmuramic acid 6-phosphate etherase (300 aa).

Positions 57–220 constitute an SIS domain; that stretch reads IAVAFQCGGR…TTGAMIRTGK (164 aa). Glutamate 85 functions as the Proton donor in the catalytic mechanism. Glutamate 116 is a catalytic residue.

Belongs to the GCKR-like family. MurNAc-6-P etherase subfamily. In terms of assembly, homodimer.

It catalyses the reaction N-acetyl-D-muramate 6-phosphate + H2O = N-acetyl-D-glucosamine 6-phosphate + (R)-lactate. Its pathway is amino-sugar metabolism; 1,6-anhydro-N-acetylmuramate degradation. The protein operates within amino-sugar metabolism; N-acetylmuramate degradation. It functions in the pathway cell wall biogenesis; peptidoglycan recycling. Specifically catalyzes the cleavage of the D-lactyl ether substituent of MurNAc 6-phosphate, producing GlcNAc 6-phosphate and D-lactate. Together with AnmK, is also required for the utilization of anhydro-N-acetylmuramic acid (anhMurNAc) either imported from the medium or derived from its own cell wall murein, and thus plays a role in cell wall recycling. The polypeptide is N-acetylmuramic acid 6-phosphate etherase (Aliivibrio salmonicida (strain LFI1238) (Vibrio salmonicida (strain LFI1238))).